The sequence spans 267 residues: tRNA pseudouridine synthase A (267 aa).

The active-site Nucleophile is aspartate 55. Tyrosine 111 contributes to the substrate binding site.

This sequence belongs to the tRNA pseudouridine synthase TruA family.

The catalysed reaction is uridine(38/39/40) in tRNA = pseudouridine(38/39/40) in tRNA. Functionally, formation of pseudouridine at positions 38, 39 and 40 in the anticodon stem and loop of transfer RNAs. The protein is tRNA pseudouridine synthase A of Thermococcus kodakarensis (strain ATCC BAA-918 / JCM 12380 / KOD1) (Pyrococcus kodakaraensis (strain KOD1)).